Here is a 412-residue protein sequence, read N- to C-terminus: Putative competence-damage inducible protein (412 aa).

The protein belongs to the CinA family.

This chain is Putative competence-damage inducible protein, found in Bacillus cytotoxicus (strain DSM 22905 / CIP 110041 / 391-98 / NVH 391-98).